The following is a 267-amino-acid chain: UPF0328 protein ECU06_0070 (267 aa).

It belongs to the UPF0328 family.

In Encephalitozoon cuniculi (strain GB-M1) (Microsporidian parasite), this protein is UPF0328 protein ECU06_0070.